The sequence spans 330 residues: ATP-dependent Clp protease proteolytic subunit-related protein 3, chloroplastic (330 aa).

The N-terminal 43 residues, 1–43 (MASCLQASMNSLLPRSSSFSPHPPLSSNSSGRRNLKTFRYAFR), are a transit peptide targeting the chloroplast. Residues 7–32 (ASMNSLLPRSSSFSPHPPLSSNSSGR) form a disordered region. Low complexity predominate over residues 8 to 30 (SMNSLLPRSSSFSPHPPLSSNSS).

Belongs to the peptidase S14 family. Component of the chloroplastic Clp protease core complex which consist of at least 16 proteins: CLPP4 (3 copies), CLPP5 (3 copies), CLPR4 (2 copies), ClpP1 (1 copy), CLPP6 (1 copy), CLPR2 (1 copy), CLPT1 (1 copy), CLPT2 (1 copy) and 3 copies of CLPP3 and/or CLPR1 and/or CLPR3. The core complex is organized in two heptameric rings, one containing CLPP3,4,5,6 in a 1:2:3:1 ratio and the other CLPP1 and CLPR1,2,3,4 in a 3:1:1:1:1 ratio.

The protein localises to the plastid. It localises to the chloroplast. The polypeptide is ATP-dependent Clp protease proteolytic subunit-related protein 3, chloroplastic (Arabidopsis thaliana (Mouse-ear cress)).